A 654-amino-acid polypeptide reads, in one-letter code: Threonine--tRNA ligase (654 aa).

Residues 1–63 (MASINVKFPD…TTDGSIEIIA (63 aa)) enclose the TGS domain. The catalytic stretch occupies residues 248 to 546 (DHRVIGNELD…LTEIYKGAFP (299 aa)). The Zn(2+) site is built by cysteine 342, histidine 393, and histidine 523.

The protein belongs to the class-II aminoacyl-tRNA synthetase family. In terms of assembly, homodimer. Zn(2+) is required as a cofactor.

It is found in the cytoplasm. The catalysed reaction is tRNA(Thr) + L-threonine + ATP = L-threonyl-tRNA(Thr) + AMP + diphosphate + H(+). Functionally, catalyzes the attachment of threonine to tRNA(Thr) in a two-step reaction: L-threonine is first activated by ATP to form Thr-AMP and then transferred to the acceptor end of tRNA(Thr). Also edits incorrectly charged L-seryl-tRNA(Thr). The protein is Threonine--tRNA ligase of Lactiplantibacillus plantarum (strain ATCC BAA-793 / NCIMB 8826 / WCFS1) (Lactobacillus plantarum).